We begin with the raw amino-acid sequence, 351 residues long: N-acetyl-gamma-glutamyl-phosphate reductase (351 aa).

Cys154 is a catalytic residue.

It belongs to the NAGSA dehydrogenase family. Type 1 subfamily.

It localises to the cytoplasm. It catalyses the reaction N-acetyl-L-glutamate 5-semialdehyde + phosphate + NADP(+) = N-acetyl-L-glutamyl 5-phosphate + NADPH + H(+). The protein operates within amino-acid biosynthesis; L-arginine biosynthesis; N(2)-acetyl-L-ornithine from L-glutamate: step 3/4. In terms of biological role, catalyzes the NADPH-dependent reduction of N-acetyl-5-glutamyl phosphate to yield N-acetyl-L-glutamate 5-semialdehyde. The polypeptide is N-acetyl-gamma-glutamyl-phosphate reductase (Prochlorococcus marinus subsp. pastoris (strain CCMP1986 / NIES-2087 / MED4)).